We begin with the raw amino-acid sequence, 2059 residues long: Histone transcription regulator 3 homolog (2059 aa).

3 TPR repeats span residues proline 11 to glycine 44, alanine 49 to serine 86, and glutamine 139 to aspartate 172. Disordered regions lie at residues alanine 337 to glutamine 378 and threonine 415 to serine 476. 2 stretches are compositionally biased toward polar residues: residues threonine 340–arginine 351 and threonine 415–proline 428. TPR repeat units lie at residues tyrosine 1029 to arginine 1064 and threonine 1271 to arginine 1304. Disordered regions lie at residues aspartate 1779–lysine 1896 and phenylalanine 1908–isoleucine 2059. Over residues alanine 1807 to glutamate 1816 the composition is skewed to basic and acidic residues. Positions proline 1825–alanine 1836 are enriched in low complexity. Residues alanine 1850–serine 1860 are compositionally biased toward polar residues. The segment covering alanine 1883 to aspartate 1894 has biased composition (acidic residues). The segment covering alanine 1925 to glycine 1937 has biased composition (low complexity). Positions glycine 1939–glycine 2036 are enriched in acidic residues.

This sequence belongs to the HIR3 family.

It is found in the nucleus. In terms of biological role, has a role in a nucleosome assembly pathway that is required for the integrity of heterochromatin and proper chromosome segregation. The chain is Histone transcription regulator 3 homolog (hir3) from Aspergillus oryzae (strain ATCC 42149 / RIB 40) (Yellow koji mold).